A 59-amino-acid chain; its full sequence is Conotoxin ViVA (59 aa).

Residues 1–19 form the signal peptide; sequence MRCVPVFIILLLLIPSASS. Positions 20-46 are excised as a propeptide; that stretch reads AAVQPKTEKDDVPLASVHDSALRILSR. Gln-47 carries the post-translational modification Pyrrolidone carboxylic acid. Intrachain disulfides connect Cys-48–Cys-55 and Cys-49–Cys-56. Ile-58 is subject to Isoleucine amide.

Belongs to the conotoxin T superfamily. As to expression, expressed by the venom duct.

Its subcellular location is the secreted. This Conus virgo (Virgin cone) protein is Conotoxin ViVA.